The following is a 454-amino-acid chain: Immediate-early protein ICP-46 homolog (454 aa).

The stretch at glutamate 330–arginine 357 forms a coiled coil. The tract at residues serine 428–methionine 454 is disordered.

It belongs to the IIV-6 393L family.

The sequence is that of Immediate-early protein ICP-46 homolog from Invertebrate iridescent virus 6 (IIV-6).